Consider the following 510-residue polypeptide: GMP synthase [glutamine-hydrolyzing] (510 aa).

In terms of domain architecture, Glutamine amidotransferase type-1 spans 5-194; it reads DILVLDFGSQ…FAKICGCEST (190 aa). Cys-82 serves as the catalytic Nucleophile. Residues His-169 and Glu-171 contribute to the active site. Residues 195-385 enclose the GMPS ATP-PPase domain; that stretch reads WNMGSFAKKE…LGLSRDIVYR (191 aa). 222–228 contacts ATP; the sequence is SGGVDSS.

Homodimer.

It catalyses the reaction XMP + L-glutamine + ATP + H2O = GMP + L-glutamate + AMP + diphosphate + 2 H(+). It participates in purine metabolism; GMP biosynthesis; GMP from XMP (L-Gln route): step 1/1. Catalyzes the synthesis of GMP from XMP. This chain is GMP synthase [glutamine-hydrolyzing], found in Campylobacter fetus subsp. fetus (strain 82-40).